The chain runs to 472 residues: Membrane-bound lytic murein transglycosylase F (472 aa).

An N-terminal signal peptide occupies residues 1–24 (MRLLVIFLLALLLMACKEAPKPLA). The interval 25-259 (DPRTTKEIIV…HLIDRYYGHA (235 aa)) is non-LT domain. The LT domain stretch occupies residues 260–472 (DRLKPVDVTT…NGFGNTLSQE (213 aa)). Glutamate 306 is an active-site residue.

The protein in the N-terminal section; belongs to the bacterial solute-binding protein 3 family. In the C-terminal section; belongs to the transglycosylase Slt family.

The protein resides in the cell outer membrane. It catalyses the reaction Exolytic cleavage of the (1-&gt;4)-beta-glycosidic linkage between N-acetylmuramic acid (MurNAc) and N-acetylglucosamine (GlcNAc) residues in peptidoglycan, from either the reducing or the non-reducing ends of the peptidoglycan chains, with concomitant formation of a 1,6-anhydrobond in the MurNAc residue.. Murein-degrading enzyme that degrades murein glycan strands and insoluble, high-molecular weight murein sacculi, with the concomitant formation of a 1,6-anhydromuramoyl product. Lytic transglycosylases (LTs) play an integral role in the metabolism of the peptidoglycan (PG) sacculus. Their lytic action creates space within the PG sacculus to allow for its expansion as well as for the insertion of various structures such as secretion systems and flagella. The sequence is that of Membrane-bound lytic murein transglycosylase F from Methylobacillus flagellatus (strain ATCC 51484 / DSM 6875 / VKM B-1610 / KT).